The sequence spans 352 residues: Anthranilate phosphoribosyltransferase (352 aa).

5-phospho-alpha-D-ribose 1-diphosphate-binding positions include glycine 83, 86-87 (GD), threonine 91, 93-96 (NIST), 111-119 (KHGGRSVSS), and alanine 123. Anthranilate is bound at residue glycine 83. Serine 95 lines the Mg(2+) pocket. An anthranilate-binding site is contributed by arginine 169. 2 residues coordinate Mg(2+): aspartate 228 and glutamate 229.

Belongs to the anthranilate phosphoribosyltransferase family. Homodimer. It depends on Mg(2+) as a cofactor.

The enzyme catalyses N-(5-phospho-beta-D-ribosyl)anthranilate + diphosphate = 5-phospho-alpha-D-ribose 1-diphosphate + anthranilate. The protein operates within amino-acid biosynthesis; L-tryptophan biosynthesis; L-tryptophan from chorismate: step 2/5. Catalyzes the transfer of the phosphoribosyl group of 5-phosphorylribose-1-pyrophosphate (PRPP) to anthranilate to yield N-(5'-phosphoribosyl)-anthranilate (PRA). The polypeptide is Anthranilate phosphoribosyltransferase (Neisseria meningitidis serogroup C (strain 053442)).